The sequence spans 138 residues: Ribulose bisphosphate carboxylase small subunit (138 aa).

It belongs to the RuBisCO small chain family. Heterohexadecamer of 8 large and 8 small subunits.

It is found in the plastid. Its subcellular location is the chloroplast. In terms of biological role, ruBisCO catalyzes two reactions: the carboxylation of D-ribulose 1,5-bisphosphate, the primary event in carbon dioxide fixation, as well as the oxidative fragmentation of the pentose substrate in the photorespiration process. Both reactions occur simultaneously and in competition at the same active site. Although the small subunit is not catalytic it is essential for maximal activity. The sequence is that of Ribulose bisphosphate carboxylase small subunit from Cyanidioschyzon merolae (strain NIES-3377 / 10D) (Unicellular red alga).